Reading from the N-terminus, the 36-residue chain is Photosystem I reaction center subunit VIII (36 aa).

Residues 8–28 (SLFVPLVGLVFPAIAMASLFL) form a helical membrane-spanning segment.

It belongs to the PsaI family.

It localises to the plastid. Its subcellular location is the chloroplast thylakoid membrane. In terms of biological role, may help in the organization of the PsaL subunit. This Brassica oleracea (Wild cabbage) protein is Photosystem I reaction center subunit VIII.